Here is a 347-residue protein sequence, read N- to C-terminus: D-alanine--D-alanine ligase (347 aa).

In terms of domain architecture, ATP-grasp spans 138–339; the sequence is KILCSHAGIP…YSQVIETILA (202 aa). ATP is bound at residue 171–226; that stretch reads SDRFTFPLFVKPVDAGSSFGCTFVDFFEQLPVAIEHALQHGKSAIVEPALDAPEVF. Mg(2+)-binding residues include Asp-296, Glu-308, and Asn-310.

It belongs to the D-alanine--D-alanine ligase family. Mg(2+) is required as a cofactor. Mn(2+) serves as cofactor.

The protein resides in the cytoplasm. It catalyses the reaction 2 D-alanine + ATP = D-alanyl-D-alanine + ADP + phosphate + H(+). It participates in cell wall biogenesis; peptidoglycan biosynthesis. Functionally, cell wall formation. The protein is D-alanine--D-alanine ligase of Tropheryma whipplei (strain Twist) (Whipple's bacillus).